The following is a 448-amino-acid chain: uncharacterized protein (448 aa).

N6-(pyridoxal phosphate)lysine is present on Lys-280.

It belongs to the class-III pyridoxal-phosphate-dependent aminotransferase family.

The protein resides in the cytoplasm. It localises to the mitochondrion. This is an uncharacterized protein from Schizosaccharomyces pombe (strain 972 / ATCC 24843) (Fission yeast).